The primary structure comprises 708 residues: Leukotoxin translocation ATP-binding protein LktB (708 aa).

The Peptidase C39 domain maps to 1–126 (MEVNHQSNDL…SCYQGKIILV (126 aa)). The ABC transmembrane type-1 domain occupies 155 to 437 (FLETLLVSIF…LAQLWQDFTQ (283 aa)). The next 5 helical transmembrane spans lie at 159-179 (LLVS…FQVV), 192-212 (LNII…LSGL), 270-290 (ALTS…MWYY), 296-316 (LVIL…SPIL), and 389-409 (VMVI…LSIG). The ABC transporter domain maps to 469-704 (IAFKNIRFRY…NNGLYSYLHQ (236 aa)). 503 to 510 (GRSGSGKS) provides a ligand contact to ATP.

The protein belongs to the ABC transporter superfamily. Protein-1 exporter (TC 3.A.1.109) family. Homodimer.

The protein resides in the cell inner membrane. It carries out the reaction ATP + H2O + proteinSide 1 = ADP + phosphate + proteinSide 2.. Part of the ABC transporter complex LktBD involved in leukotoxin export. Transmembrane domains (TMD) form a pore in the inner membrane and the ATP-binding domain (NBD) is responsible for energy generation. This is Leukotoxin translocation ATP-binding protein LktB (lktB) from Pasteurella haemolytica-like sp. (strain 5943B).